The chain runs to 268 residues: Small ribosomal subunit protein uS2 (268 aa).

It belongs to the universal ribosomal protein uS2 family.

This is Small ribosomal subunit protein uS2 from Coprothermobacter proteolyticus (strain ATCC 35245 / DSM 5265 / OCM 4 / BT).